A 294-amino-acid polypeptide reads, in one-letter code: NAD kinase (294 aa).

Asp-72 serves as the catalytic Proton acceptor. NAD(+)-binding positions include 72–73 (DG), 146–147 (ND), Arg-157, Arg-174, Asp-176, 187–192 (TAYALS), and Gln-247.

Belongs to the NAD kinase family. It depends on a divalent metal cation as a cofactor.

The protein localises to the cytoplasm. The enzyme catalyses NAD(+) + ATP = ADP + NADP(+) + H(+). Its function is as follows. Involved in the regulation of the intracellular balance of NAD and NADP, and is a key enzyme in the biosynthesis of NADP. Catalyzes specifically the phosphorylation on 2'-hydroxyl of the adenosine moiety of NAD to yield NADP. The protein is NAD kinase of Saccharophagus degradans (strain 2-40 / ATCC 43961 / DSM 17024).